The primary structure comprises 112 residues: Tyrosine-protein phosphatase 8 (112 aa).

Residues 1 to 112 (ENSTAIVMIT…ANSEYGPVVV (112 aa)) enclose the Tyrosine-protein phosphatase domain.

This sequence belongs to the protein-tyrosine phosphatase family.

The enzyme catalyses O-phospho-L-tyrosyl-[protein] + H2O = L-tyrosyl-[protein] + phosphate. In Styela plicata (Wrinkled sea squirt), this protein is Tyrosine-protein phosphatase 8 (STY-8).